The chain runs to 259 residues: Ovulation prohormone (259 aa).

Residues 1-34 (MKMSGLLSKPDYGVVGIVFTVVFCCWCSSSTTHA) form the signal peptide. Residues 35 to 102 (LSIAEPGRDR…SGEKTRLTAA (68 aa)) constitute a propeptide that is removed on maturation. The segment at 42–103 (RDRYDKRSPT…GEKTRLTAAK (62 aa)) is disordered. Repeats lie at residues 119-123 (RLRFH) and 146-150 (RLRFH). A 2 X 5 AA repeats of R-L-R-F-H region spans residues 119–150 (RLRFHKRRVDSADESNDDGFDRKAREPRLRFH). Residues 149 to 197 (FHDVRKRSATAEEGSENAEIEESHLGNSRSRRSAGSAPSSANEVQRSKR) form a disordered region. A propeptide spanning residues 181–195 (SAGSAPSSANEVQRS) is cleaved from the precursor. L233 is subject to Leucine amide. A propeptide spanning residues 237–259 (GSAFFDHIPIIFGEPQYDYQPFK) is cleaved from the precursor.

The protein belongs to the molluscan ELH family.

The protein resides in the secreted. CDCH induces ovulation and egg-mass production; it may also stimulate synthesis of secretory products in the female accessory sex glands and affect neurons in the neuronal circuits controlling locomotion and feeding. In terms of biological role, calfluxin is involved in the influx of calcium into mitochondria of the albumen gland. Its function is as follows. CDCA (or alpha-CDCP) triggers the electrical activity of the caudodorsal cells (CDCS). The polypeptide is Ovulation prohormone (Lymnaea stagnalis (Great pond snail)).